Consider the following 574-residue polypeptide: 2-succinyl-5-enolpyruvyl-6-hydroxy-3-cyclohexene-1-carboxylate synthase (574 aa).

Belongs to the TPP enzyme family. MenD subfamily. In terms of assembly, homodimer. Mg(2+) serves as cofactor. Requires Mn(2+) as cofactor. The cofactor is thiamine diphosphate.

The catalysed reaction is isochorismate + 2-oxoglutarate + H(+) = 5-enolpyruvoyl-6-hydroxy-2-succinyl-cyclohex-3-ene-1-carboxylate + CO2. It functions in the pathway quinol/quinone metabolism; 1,4-dihydroxy-2-naphthoate biosynthesis; 1,4-dihydroxy-2-naphthoate from chorismate: step 2/7. Its pathway is quinol/quinone metabolism; menaquinone biosynthesis. Functionally, catalyzes the thiamine diphosphate-dependent decarboxylation of 2-oxoglutarate and the subsequent addition of the resulting succinic semialdehyde-thiamine pyrophosphate anion to isochorismate to yield 2-succinyl-5-enolpyruvyl-6-hydroxy-3-cyclohexene-1-carboxylate (SEPHCHC). The polypeptide is 2-succinyl-5-enolpyruvyl-6-hydroxy-3-cyclohexene-1-carboxylate synthase (Vibrio atlanticus (strain LGP32) (Vibrio splendidus (strain Mel32))).